A 588-amino-acid polypeptide reads, in one-letter code: Glycoprotein (588 aa).

The signal sequence occupies residues 1 to 22; that stretch reads MSILVIILILPILFGEVPPVNS. Topologically, residues 23-547 are virion surface; sequence GRVVDLNRNV…TTLEEEVKHG (525 aa). Residues 548–568 traverse the membrane as a helical segment; it reads VIIVFFTVIGLIIAVPTLKML. Residues 569–588 are Intravirion-facing; it reads LKGRRPYEPVKSPVVWGGPR.

Belongs to the nucleorhabdovirus glycoprotein family. In terms of assembly, homotrimer. Interacts with matrix protein. Post-translationally, glycosylated by host. Glycosylation is crucial for glycoprotein export at the cell surface.

The protein localises to the virion membrane. Its function is as follows. Attaches the virus to host cellular receptor, inducing endocytosis of the virion. In the endosome, the acidic pH induces conformational changes in the glycoprotein trimer, which trigger fusion between virus and cell membrane. The polypeptide is Glycoprotein (G) (Taro vein chlorosis virus (TAVCV)).